Reading from the N-terminus, the 427-residue chain is Serine--tRNA ligase (427 aa).

232 to 234 (TAE) contributes to the L-serine binding site. 263-265 (RSE) serves as a coordination point for ATP. Glu286 is an L-serine binding site. Residue 350 to 353 (EISS) coordinates ATP. Ser385 serves as a coordination point for L-serine.

It belongs to the class-II aminoacyl-tRNA synthetase family. Type-1 seryl-tRNA synthetase subfamily. In terms of assembly, homodimer. The tRNA molecule binds across the dimer.

The protein resides in the cytoplasm. It catalyses the reaction tRNA(Ser) + L-serine + ATP = L-seryl-tRNA(Ser) + AMP + diphosphate + H(+). The enzyme catalyses tRNA(Sec) + L-serine + ATP = L-seryl-tRNA(Sec) + AMP + diphosphate + H(+). Its pathway is aminoacyl-tRNA biosynthesis; selenocysteinyl-tRNA(Sec) biosynthesis; L-seryl-tRNA(Sec) from L-serine and tRNA(Sec): step 1/1. Functionally, catalyzes the attachment of serine to tRNA(Ser). Is also able to aminoacylate tRNA(Sec) with serine, to form the misacylated tRNA L-seryl-tRNA(Sec), which will be further converted into selenocysteinyl-tRNA(Sec). The chain is Serine--tRNA ligase from Lacticaseibacillus casei (strain BL23) (Lactobacillus casei).